Here is a 342-residue protein sequence, read N- to C-terminus: UDP-glucuronic acid decarboxylase 3 (342 aa).

Positions 1–11 (MAATSEKQNTT) are enriched in polar residues. The tract at residues 1–22 (MAATSEKQNTTKPPPSPSPLRN) is disordered. Residue 61-86 (DNYFTGSKENLKKWIGHPRFELIRHD) participates in NAD(+) binding. Arg170 serves as a coordination point for substrate. The Proton acceptor role is filled by Tyr173. 173 to 177 (YDEGK) is an NAD(+) binding site. Residue Asn202 coordinates substrate. Arg214 lines the NAD(+) pocket. Substrate contacts are provided by residues 215–219 (VVSNF), 232–239 (QKPGTQTR), and 299–303 (DPRQR).

Belongs to the NAD(P)-dependent epimerase/dehydratase family. UDP-glucuronic acid decarboxylase subfamily. NAD(+) is required as a cofactor. Ubiquitous.

The protein resides in the cytoplasm. It carries out the reaction UDP-alpha-D-glucuronate + H(+) = UDP-alpha-D-xylose + CO2. It participates in nucleotide-sugar biosynthesis; UDP-alpha-D-xylose biosynthesis; UDP-alpha-D-xylose from UDP-alpha-D-glucuronate: step 1/1. Its function is as follows. Catalyzes the NAD-dependent decarboxylation of UDP-glucuronic acid to UDP-xylose. Necessary for the biosynthesis of the core tetrasaccharide in glycosaminoglycan biosynthesis. This is UDP-glucuronic acid decarboxylase 3 (UXS3) from Arabidopsis thaliana (Mouse-ear cress).